The sequence spans 334 residues: Biotin synthase (334 aa).

Residues Thr-41–Arg-260 form the Radical SAM core domain. Positions 56, 60, and 63 each coordinate [4Fe-4S] cluster. [2Fe-2S] cluster-binding residues include Cys-100, Cys-131, Cys-191, and Arg-264.

The protein belongs to the radical SAM superfamily. Biotin synthase family. Homodimer. It depends on [4Fe-4S] cluster as a cofactor. [2Fe-2S] cluster is required as a cofactor.

It carries out the reaction (4R,5S)-dethiobiotin + (sulfur carrier)-SH + 2 reduced [2Fe-2S]-[ferredoxin] + 2 S-adenosyl-L-methionine = (sulfur carrier)-H + biotin + 2 5'-deoxyadenosine + 2 L-methionine + 2 oxidized [2Fe-2S]-[ferredoxin]. The protein operates within cofactor biosynthesis; biotin biosynthesis; biotin from 7,8-diaminononanoate: step 2/2. Its function is as follows. Catalyzes the conversion of dethiobiotin (DTB) to biotin by the insertion of a sulfur atom into dethiobiotin via a radical-based mechanism. The sequence is that of Biotin synthase from Bradyrhizobium sp. (strain ORS 278).